Consider the following 258-residue polypeptide: 6-phosphogluconolactonase (258 aa).

The residue at position 2 (Ala2) is an N-acetylalanine. Ser49 carries the post-translational modification Phosphoserine. Lys180 bears the N6-acetyllysine mark.

It belongs to the glucosamine/galactosamine-6-phosphate isomerase family. 6-phosphogluconolactonase subfamily.

It is found in the cytoplasm. The enzyme catalyses 6-phospho-D-glucono-1,5-lactone + H2O = 6-phospho-D-gluconate + H(+). It functions in the pathway carbohydrate degradation; pentose phosphate pathway; D-ribulose 5-phosphate from D-glucose 6-phosphate (oxidative stage): step 2/3. Hydrolysis of 6-phosphogluconolactone to 6-phosphogluconate. This Homo sapiens (Human) protein is 6-phosphogluconolactonase.